A 1038-amino-acid polypeptide reads, in one-letter code: Zinc finger protein 628 (1038 aa).

Residues 1–31 form a disordered region; it reads MAGSHVDMAPASTTEGTGEKPGPTAPAPTPA. A compositionally biased stretch (low complexity) spans 13-22; it reads TTEGTGEKPG. 6 consecutive C2H2-type zinc fingers follow at residues 34-56, 62-84, 90-112, 118-140, 146-168, and 174-196; these read YECGECGKSFRWSSRLLHHQRTH, YKCPDCPKAFKGSSALLYHQRGH, YQCPDCPKAFKRSSLLQIHRSVH, FTCGQCGLAFKWSSHYQYHLRQH, YPCPDCPKAFKNSSSLRRHRHVH, and YTCGICGKSFTQSTNLRQHQRVH. Phosphothreonine is present on threonine 197. The C2H2-type 7 zinc finger occupies 202–224; that stretch reads FRCPLCPKTFTHSSNLLLHHRTH. 2 disordered regions span residues 220-242 and 254-273; these read HHRTHGPAPGPAPAPAPPGETSR and LQPRSPPEPPAPPPQPPPVV. Pro residues-rich tracts occupy residues 227–237 and 257–273; these read APGPAPAPAPP and RSPPEPPAPPPQPPPVV. 7 consecutive C2H2-type zinc fingers follow at residues 346–368, 376–398, 446–468, 474–496, 502–524, 530–552, and 558–580; these read FACLPCGKSFRTVAGLSRHQHSH, FRCGSCDGAFPQLASLLAHQQCH, YKCAECGKAFKGSSGLRYHLRDH, YQCGECGKAFKRSSLLAIHQRVH, FTCGQCGLTFKWSSHYQYHLRLH, YACTECGKAFRNTSCLRRHRHVH, and HSCSVCGKSFAQTSNLRQHQRVH. Threonine 581 is subject to Phosphothreonine. 2 C2H2-type zinc fingers span residues 586–608 and 614–636; these read FRCPLCPKTFTHSSNLLLHQRTH and FACPICGRGFVMAAYLQRHLRTH. Disordered stretches follow at residues 637–661 and 717–763; these read TPATTTSGTTGSAVASQPPAPLAAA and PSSV…AGQG. A compositionally biased stretch (pro residues) spans 723–733; it reads PTPPPPPPPPK. Over residues 734–756 the composition is skewed to low complexity; sequence VILLPPASAGGPGSGAARPGPRS. Repeat copies occupy residues 811 to 821, 822 to 832, 833 to 843, and 844 to 854. A 4 X 11 AA tandem repeats of VQLQP-[AL]-[QT]-[EG]-[VQ]-[ATV]-[ST] region spans residues 811–854; that stretch reads VQLQPAQEVATVQLQPAQEVTTVQLQPAQEVTTVQLQPLTGQVS. Residues 922–1038 are interaction with TAF4B; sequence DGEQTRLCVQ…LPAVQLVHTF (117 aa).

Interacts with TAF4B. As to expression, expressed widely in testis, in both germline and somatic cells. Seems to have particularly strong expression in meiotic spermatocytes, postmeiotic round spermatids and Sertoli cells. Not detected in elongating spermatids or mature sperm (at protein level). Expressed in testis, ovary, spleen, lung, brain, liver and kidney. Expressed in D3 embryonic stem cells and F9 embryonal carcinoma cells.

It localises to the nucleus. Functionally, transcriptional activator. Binds DNA on GT-box consensus sequence 5'-TTGGTT-3'. Plays a role in spermiogenesis. In Mus musculus (Mouse), this protein is Zinc finger protein 628.